A 245-amino-acid polypeptide reads, in one-letter code: UPF0328 protein ECU09_2010 (245 aa).

It belongs to the UPF0328 family.

This is UPF0328 protein ECU09_2010 from Encephalitozoon cuniculi (strain GB-M1) (Microsporidian parasite).